A 113-amino-acid polypeptide reads, in one-letter code: Large ribosomal subunit protein uL22 (113 aa).

The protein belongs to the universal ribosomal protein uL22 family. Part of the 50S ribosomal subunit.

Its function is as follows. This protein binds specifically to 23S rRNA; its binding is stimulated by other ribosomal proteins, e.g. L4, L17, and L20. It is important during the early stages of 50S assembly. It makes multiple contacts with different domains of the 23S rRNA in the assembled 50S subunit and ribosome. Functionally, the globular domain of the protein is located near the polypeptide exit tunnel on the outside of the subunit, while an extended beta-hairpin is found that lines the wall of the exit tunnel in the center of the 70S ribosome. The protein is Large ribosomal subunit protein uL22 of Bacillus cereus (strain ATCC 10987 / NRS 248).